The primary structure comprises 114 residues: Large ribosomal subunit protein bL19 (114 aa).

This sequence belongs to the bacterial ribosomal protein bL19 family.

In terms of biological role, this protein is located at the 30S-50S ribosomal subunit interface and may play a role in the structure and function of the aminoacyl-tRNA binding site. This chain is Large ribosomal subunit protein bL19, found in Clostridium botulinum (strain ATCC 19397 / Type A).